We begin with the raw amino-acid sequence, 156 residues long: Bacterial ferritin (156 aa).

The 146-residue stretch at methionine 1–glycine 146 folds into the Ferritin-like diiron domain. Fe cation-binding residues include glutamate 18, glutamate 51, histidine 54, glutamate 94, glutamate 128, and histidine 131.

Belongs to the bacterioferritin family. The bacterioferritin (BFR) complex is formed of 24 subunits (BfrA and BfrB) of unknown stoichiometry. The BFR is arranged as 12 dimers that are packed together to form an approximately spherical molecule with a central cavity, in which large amounts of iron can be deposited.

The protein resides in the cytoplasm. It catalyses the reaction 4 Fe(2+) + O2 + 4 H(+) = 4 Fe(3+) + 2 H2O. It carries out the reaction Fe(2+)(in) = Fe(2+)(out). Functionally, part of the iron-storage bacterioferritin (BFR) complex which stores about 50% of intracellular iron. Iron-storage protein, whose ferroxidase center binds Fe(2+), oxidizes it using dioxygen to Fe(3+), and participates in the subsequent Fe(3+) oxide mineral core formation within the central cavity of the BFR protein shell. BFR rapidly binds iron in labeling experiments in vivo during iron-limiting conditions. The polypeptide is Bacterial ferritin (Synechocystis sp. (strain ATCC 27184 / PCC 6803 / Kazusa)).